Reading from the N-terminus, the 166-residue chain is Phosphopantetheine adenylyltransferase (166 aa).

Ser-8 lines the substrate pocket. ATP contacts are provided by residues 8–9 and His-16; that span reads SF. Residues Lys-40, Thr-72, and Arg-86 each coordinate substrate. Residues 87 to 89, Glu-97, and 122 to 128 contribute to the ATP site; these read GLR and HSFLSSS.

Belongs to the bacterial CoaD family. Homohexamer. The cofactor is Mg(2+).

It localises to the cytoplasm. The enzyme catalyses (R)-4'-phosphopantetheine + ATP + H(+) = 3'-dephospho-CoA + diphosphate. The protein operates within cofactor biosynthesis; coenzyme A biosynthesis; CoA from (R)-pantothenate: step 4/5. Its function is as follows. Reversibly transfers an adenylyl group from ATP to 4'-phosphopantetheine, yielding dephospho-CoA (dPCoA) and pyrophosphate. This chain is Phosphopantetheine adenylyltransferase, found in Synechococcus sp. (strain RCC307).